The chain runs to 434 residues: Serine/threonine-protein kinase Sgk1-A (434 aa).

The segment at 66–94 (PQEPELLNENSSPPPSPSQQINLGPSSNP) is disordered. The span at 84–94 (QQINLGPSSNP) shows a compositional bias: polar residues. The 258-residue stretch at 101-358 (FQFLKIIGKG…FMEIKNHIFF (258 aa)) folds into the Protein kinase domain. Residues 107-115 (IGKGSFGKV) and K130 each bind ATP. The active-site Proton acceptor is the D225. Residues 359–434 (SPINWDDLIN…SYAPPMESYL (76 aa)) enclose the AGC-kinase C-terminal domain.

The protein belongs to the protein kinase superfamily. AGC Ser/Thr protein kinase family.

It is found in the cytoplasm. It localises to the nucleus. The protein resides in the endoplasmic reticulum. It catalyses the reaction L-seryl-[protein] + ATP = O-phospho-L-seryl-[protein] + ADP + H(+). The enzyme catalyses L-threonyl-[protein] + ATP = O-phospho-L-threonyl-[protein] + ADP + H(+). Functionally, protein kinase that may play an important role in cellular stress response. Plays an important role in activating certain potassium, sodium, and chloride channels, suggesting an involvement in the regulation of processes such as cell survival, neuronal excitability, and renal sodium excretion. The polypeptide is Serine/threonine-protein kinase Sgk1-A (sgk1-a) (Xenopus laevis (African clawed frog)).